Consider the following 345-residue polypeptide: MHSKNNTILKMIKGEEVTHTPVWFMRQAGRSQPEYRALKEKYSLFEITHQPELCAYVTHLPVDNYQTDAAILYKDIMTPLKPIGVDVEIKSGIGPVISNTIKTVQDVEKLGQIDPKRDVPYVLDTIKLLTEEKLNVPLIGFVGAPFTLASYMIEGGPSKNYHFTKAMMFRDEATWFALMDHLVDMSITYASAQIEAGAELIQIFDSWIGALNAVDFNYYIKPSMERLIKGIKAQHDVPIILFGVNATHLIEEWNNLPIDVLGIDWRTTIKETSDSGVAKTIQGNLDPSLLLAPWDVIQPRLDKILDEGMQHGKHIFNLGHGVFPEVNPDTLKQITAYVHDYTKRK.

Substrate-binding positions include 26 to 30 (RQAGR), Phe-45, Asp-75, Tyr-151, Ser-206, and His-320.

Belongs to the uroporphyrinogen decarboxylase family. As to quaternary structure, homodimer.

The protein resides in the cytoplasm. It catalyses the reaction uroporphyrinogen III + 4 H(+) = coproporphyrinogen III + 4 CO2. The protein operates within porphyrin-containing compound metabolism; protoporphyrin-IX biosynthesis; coproporphyrinogen-III from 5-aminolevulinate: step 4/4. Catalyzes the decarboxylation of four acetate groups of uroporphyrinogen-III to yield coproporphyrinogen-III. This chain is Uroporphyrinogen decarboxylase, found in Staphylococcus carnosus (strain TM300).